The following is a 429-amino-acid chain: UDP-N-acetylglucosamine 1-carboxyvinyltransferase (429 aa).

Phosphoenolpyruvate is bound at residue 22 to 23; the sequence is KN. Residue Arg-102 participates in UDP-N-acetyl-alpha-D-glucosamine binding. Residue Cys-126 is the Proton donor of the active site. Cys-126 bears the 2-(S-cysteinyl)pyruvic acid O-phosphothioketal mark. UDP-N-acetyl-alpha-D-glucosamine-binding positions include 131–135, Asp-316, and Ile-338; that span reads RPVDL.

This sequence belongs to the EPSP synthase family. MurA subfamily.

Its subcellular location is the cytoplasm. The catalysed reaction is phosphoenolpyruvate + UDP-N-acetyl-alpha-D-glucosamine = UDP-N-acetyl-3-O-(1-carboxyvinyl)-alpha-D-glucosamine + phosphate. It functions in the pathway cell wall biogenesis; peptidoglycan biosynthesis. Functionally, cell wall formation. Adds enolpyruvyl to UDP-N-acetylglucosamine. This chain is UDP-N-acetylglucosamine 1-carboxyvinyltransferase, found in Afipia carboxidovorans (strain ATCC 49405 / DSM 1227 / KCTC 32145 / OM5) (Oligotropha carboxidovorans).